Reading from the N-terminus, the 285-residue chain is RNA 5'-monophosphate methyltransferase (285 aa).

S-adenosyl-L-methionine contacts are provided by residues Arg46, Asn77, Asp111, 136 to 137 (DI), and Met165. In terms of domain architecture, Bin3-type SAM spans 53 to 275 (ELLRQLFPPE…KHTHETQAIP (223 aa)).

Belongs to the methyltransferase superfamily. Interacts with DICER1; the interaction may be mediated by RNA.

The protein resides in the cytoplasm. The enzyme catalyses a 5'-end 5'-phospho-ribonucleoside-RNA + S-adenosyl-L-methionine = a 5'-end (5'-methylphospho)-ribonucleoside-RNA + S-adenosyl-L-homocysteine. It catalyses the reaction a 5'-end 5'-phospho-ribonucleoside-RNA + 2 S-adenosyl-L-methionine = a 5'-end (5'-bismethylphospho)-ribonucleoside-RNA + 2 S-adenosyl-L-homocysteine. In terms of biological role, O-methyltransferase that specifically monomethylates 5'-monophosphate of cytoplasmic histidyl tRNA (tRNA(His)), acting as a capping enzyme by protecting tRNA(His) from cleavage by DICER1. Also able, with less efficiently, to methylate the 5' monophosphate of a subset of pre-miRNAs, acting as a negative regulator of miRNA processing. The 5' monophosphate of pre-miRNAs is recognized by DICER1 and is required for pre-miRNAs processing: methylation at this position reduces the processing of pre-miRNAs by DICER1. Was also reported to mediate dimethylation of pre-miR-145; however dimethylation cannot be reproduced by another group which observes a monomethylation of pre-miR-145. The sequence is that of RNA 5'-monophosphate methyltransferase from Mus musculus (Mouse).